A 255-amino-acid chain; its full sequence is F-box/SPRY domain-containing protein 1 (255 aa).

The F-box domain maps to 3-51 (DPVAALCNFNVLEVIFSYLDLNDLSRCSQVCRSWHHFLNDENSDVWRWH). Residues 61–253 (MKSDLLTSVS…VSMVYLGTPL (193 aa)) enclose the B30.2/SPRY domain.

Belongs to the FBXO45/Fsn family. As to quaternary structure, component of an E3 ubiquitin ligase complex composed of hiw and Fsn.

It is found in the synapse. It functions in the pathway protein modification; protein ubiquitination. Required in the presynaptic motoneuron to down-regulate the levels of wnd and restrain synaptic terminal growth at the neuromuscular junction (NMJ). In Drosophila willistoni (Fruit fly), this protein is F-box/SPRY domain-containing protein 1.